The chain runs to 432 residues: MSKISKILAREIMDSRGNPTVEADVYLESGAFGRAAAPSGASTGSREALELRDGDKARYLGKGVLKAVAAINVNIQAALIGQSALDQANIDQIMIDLDGTENKEQFGANAILAVSLANAKAAANEKKVQLFEHIADLNGTPGVYSLPLPMMNIINGGEHADNNVDIQEFMVQPVGAKSFREALRMGAEIFHALKKVLSSKGMSTSVGDEGGFAPNLESNADALAVIKVAVEAAGYELGKDVTLAMDCAASEFYDADKGIYDLTGEGKQFTANEFSDFLGELCKEYPIVSIEDGLDESDWDGFKYQTDLLGDKVQIVGDDLFVTNTKILARGIENGIGNSILIKFNQIGTLTETLAAIKMAKDAGFTAVISHRSGETEDATIADLAVGTAAGQIKTGSLCRSDRVSKYNQLLRIEEFLGDKAIFNGLSEVKGQ.

Residue glutamine 167 participates in (2R)-2-phosphoglycerate binding. Glutamate 209 acts as the Proton donor in catalysis. Positions 246, 291, and 318 each coordinate Mg(2+). (2R)-2-phosphoglycerate contacts are provided by lysine 343, arginine 372, serine 373, and lysine 394. Residue lysine 343 is the Proton acceptor of the active site.

It belongs to the enolase family. In terms of assembly, component of the RNA degradosome, a multiprotein complex involved in RNA processing and mRNA degradation. Mg(2+) serves as cofactor.

It is found in the cytoplasm. It localises to the secreted. Its subcellular location is the cell surface. The enzyme catalyses (2R)-2-phosphoglycerate = phosphoenolpyruvate + H2O. Its pathway is carbohydrate degradation; glycolysis; pyruvate from D-glyceraldehyde 3-phosphate: step 4/5. Functionally, catalyzes the reversible conversion of 2-phosphoglycerate (2-PG) into phosphoenolpyruvate (PEP). It is essential for the degradation of carbohydrates via glycolysis. This chain is Enolase, found in Colwellia psychrerythraea (strain 34H / ATCC BAA-681) (Vibrio psychroerythus).